The sequence spans 370 residues: Cathepsin B-like cysteine proteinase 3 (370 aa).

The signal sequence occupies residues Met1–Ala16. A propeptide spanning residues Phe17–Pro91 is cleaved from the precursor. Cystine bridges form between Cys105–Cys134, Cys117–Cys162, Cys153–Cys210, Cys154–Cys158, Cys190–Cys214, and Cys198–Cys202. Cys120 is a catalytic residue. The N-linked (GlcNAc...) asparagine glycan is linked to Asn138. Catalysis depends on residues His284 and Asn304.

Belongs to the peptidase C1 family.

The sequence is that of Cathepsin B-like cysteine proteinase 3 (cpr-3) from Caenorhabditis elegans.